Consider the following 458-residue polypeptide: Serine--tRNA ligase (458 aa).

252–254 (TAE) lines the L-serine pocket. Residues 283-285 (RKE) and Val-299 contribute to the ATP site. Position 306 (Glu-306) interacts with L-serine. ATP is bound at residue 370–373 (EMVS). Residue Thr-405 coordinates L-serine.

It belongs to the class-II aminoacyl-tRNA synthetase family. Type-1 seryl-tRNA synthetase subfamily. In terms of assembly, homodimer. The tRNA molecule binds across the dimer.

It localises to the cytoplasm. The catalysed reaction is tRNA(Ser) + L-serine + ATP = L-seryl-tRNA(Ser) + AMP + diphosphate + H(+). The enzyme catalyses tRNA(Sec) + L-serine + ATP = L-seryl-tRNA(Sec) + AMP + diphosphate + H(+). Its pathway is aminoacyl-tRNA biosynthesis; selenocysteinyl-tRNA(Sec) biosynthesis; L-seryl-tRNA(Sec) from L-serine and tRNA(Sec): step 1/1. Its function is as follows. Catalyzes the attachment of serine to tRNA(Ser). Is also able to aminoacylate tRNA(Sec) with serine, to form the misacylated tRNA L-seryl-tRNA(Sec), which will be further converted into selenocysteinyl-tRNA(Sec). The chain is Serine--tRNA ligase from Sulfolobus acidocaldarius (strain ATCC 33909 / DSM 639 / JCM 8929 / NBRC 15157 / NCIMB 11770).